A 906-amino-acid polypeptide reads, in one-letter code: Protein translocase subunit SecA (906 aa).

ATP contacts are provided by residues Q87, 105 to 109 (GEGKT), and D512. Residues 879–906 (REGEKIGRNDPCPCGSGQKYKQCHGKLS) are disordered. Zn(2+) contacts are provided by C890, C892, C901, and H902.

Belongs to the SecA family. In terms of assembly, monomer and homodimer. Part of the essential Sec protein translocation apparatus which comprises SecA, SecYEG and auxiliary proteins SecDF-YajC and YidC. It depends on Zn(2+) as a cofactor.

It is found in the cell inner membrane. Its subcellular location is the cytoplasm. The enzyme catalyses ATP + H2O + cellular proteinSide 1 = ADP + phosphate + cellular proteinSide 2.. In terms of biological role, part of the Sec protein translocase complex. Interacts with the SecYEG preprotein conducting channel. Has a central role in coupling the hydrolysis of ATP to the transfer of proteins into and across the cell membrane, serving both as a receptor for the preprotein-SecB complex and as an ATP-driven molecular motor driving the stepwise translocation of polypeptide chains across the membrane. The polypeptide is Protein translocase subunit SecA (Shewanella frigidimarina (strain NCIMB 400)).